The chain runs to 251 residues: Triosephosphate isomerase (251 aa).

9–11 provides a ligand contact to substrate; that stretch reads NWK. The Electrophile role is filled by His-94. Glu-167 (proton acceptor) is an active-site residue. Residues Gly-173, Ser-213, and 234 to 235 each bind substrate; that span reads GG.

Belongs to the triosephosphate isomerase family. Homodimer.

The protein resides in the cytoplasm. It carries out the reaction D-glyceraldehyde 3-phosphate = dihydroxyacetone phosphate. It functions in the pathway carbohydrate biosynthesis; gluconeogenesis. Its pathway is carbohydrate degradation; glycolysis; D-glyceraldehyde 3-phosphate from glycerone phosphate: step 1/1. In terms of biological role, involved in the gluconeogenesis. Catalyzes stereospecifically the conversion of dihydroxyacetone phosphate (DHAP) to D-glyceraldehyde-3-phosphate (G3P). This Finegoldia magna (strain ATCC 29328 / DSM 20472 / WAL 2508) (Peptostreptococcus magnus) protein is Triosephosphate isomerase.